The sequence spans 297 residues: Internalin C (297 aa).

A signal peptide spans 1 to 34 (MLKKNNWLQNAVIAMLVLIVGLCINMGSGTKVQA). LRR repeat units follow at residues 74 to 96 (LSGVQNFNGDNSNIQSLAGMQFF), 97 to 120 (TNLKELHLSHNQISDLSPLKDLTK), 122 to 139 (EELSVNRNRLKNLNGIPS), 140 to 161 (ACLSRLFLDNNELRDTDSLIHL), 162 to 184 (KNLEILSIRNNKLKSIVMLGFLS), and 186 to 207 (LEVLDLHGNEITNTGGLTRLKK).

Belongs to the internalin family. Interacts in vitro with human intestinal mucin-2 (MUC2) but not with mucin-1; binding is slightly better at pH 5.5, (the pH of the intestine) than at pH 7.4. Interacts with the SH3 6 domain of human DNMBP (Tuba). Interacts with I-kappa-B kinase alpha (IKKA, CHUK).

It is found in the secreted. Its subcellular location is the host cytoplasm. A virulence enhancer that has at least 2 dissociable functions in infection; it impairs translocation of host transcription factor NF-kappa-B to the nucleus and antagonizes the function of the Tuba dynamin-binding protein, promoting bacterial spreading. Perturbs the morphology of host cell junctions by impairing host DNMBP (Tuba) and WASL interaction, altering cortical tension at the cell junctions and allowing bacteria to more efficiently form bacteria-filled cell protrusions which promote bacterial spreading within infected host tissue. Down-regulates the host inflammation response usually induced by Listeria infection. Interacts with host I-kappa-B kinase alpha (IKKA, CHUK), which prevents IKKA from phosphorylating NF-kappa-B inhibitor alpha (IKBA, NFKBIA) and thus delays degradation of phospho-IKBA. Translocation of host transcription factor p65 (a subunit of NF-kappa-B, RELA) into the nucleus is impaired, which prevents activation of NF-KB-regulated genes. Recognized by serum from healthy humans exposed to L.monocytogenes as well from patients who have recovered from listeriosis. The polypeptide is Internalin C (Listeria monocytogenes serotype 1/2a (strain EGD / Mackaness)).